A 241-amino-acid chain; its full sequence is Ribosomal RNA large subunit methyltransferase E (241 aa).

5 residues coordinate S-adenosyl-L-methionine: Gly-88, Trp-90, Asp-111, Asp-127, and Asp-151. Catalysis depends on Lys-191, which acts as the Proton acceptor.

It belongs to the class I-like SAM-binding methyltransferase superfamily. RNA methyltransferase RlmE family.

Its subcellular location is the cytoplasm. It catalyses the reaction uridine(2552) in 23S rRNA + S-adenosyl-L-methionine = 2'-O-methyluridine(2552) in 23S rRNA + S-adenosyl-L-homocysteine + H(+). Specifically methylates the uridine in position 2552 of 23S rRNA at the 2'-O position of the ribose in the fully assembled 50S ribosomal subunit. The chain is Ribosomal RNA large subunit methyltransferase E from Bartonella quintana (strain Toulouse) (Rochalimaea quintana).